Consider the following 176-residue polypeptide: UBA-like domain-containing protein 1 (176 aa).

The disordered stretch occupies residues 87 to 176 (SESFHGGGGS…RAHPAMEAER (90 aa)). The segment covering 120 to 137 (TPSWPTAASPPGGPQQHQ) has biased composition (low complexity). Positions 138–150 (PQPPLWTPAPPSP) are enriched in pro residues. Residues 166–176 (PRAHPAMEAER) are compositionally biased toward basic and acidic residues.

The protein belongs to the UBALD family.

The chain is UBA-like domain-containing protein 1 (Ubald1) from Mus musculus (Mouse).